Reading from the N-terminus, the 172-residue chain is Translation initiation factor IF-3 (172 aa).

This sequence belongs to the IF-3 family. In terms of assembly, monomer.

The protein resides in the cytoplasm. In terms of biological role, IF-3 binds to the 30S ribosomal subunit and shifts the equilibrium between 70S ribosomes and their 50S and 30S subunits in favor of the free subunits, thus enhancing the availability of 30S subunits on which protein synthesis initiation begins. This Geobacter metallireducens (strain ATCC 53774 / DSM 7210 / GS-15) protein is Translation initiation factor IF-3.